A 202-amino-acid polypeptide reads, in one-letter code: Small ribosomal subunit protein uS4 (202 aa).

Residues 22–43 (TRKSARRAYPPGQHGQNRRKRS) are disordered. In terms of domain architecture, S4 RNA-binding spans 90-152 (MRLDNTVFRL…EKSKEMVKTN (63 aa)).

It belongs to the universal ribosomal protein uS4 family. In terms of assembly, part of the 30S ribosomal subunit. Contacts protein S5. The interaction surface between S4 and S5 is involved in control of translational fidelity.

Its function is as follows. One of the primary rRNA binding proteins, it binds directly to 16S rRNA where it nucleates assembly of the body of the 30S subunit. With S5 and S12 plays an important role in translational accuracy. The chain is Small ribosomal subunit protein uS4 from Trichodesmium erythraeum (strain IMS101).